The chain runs to 480 residues: MSRRLRRTKIVTTLGPATDRDNNLEKVIAAGANVVRMNFSHGSPEDHKMRADKVREIAAKLGRHVAILGDLQGPKIRVSTFKEGKVFLNIGDKFLLDANLGKGEGDKEKVGIDYKGLPADVVPGDILLLDDGRVQLKVLEVQGMKVFTEVTVGGPLSNNKGINKLGGGLSAEALTEKDKADIQTAALIGVDYLAVSFPRCGEDLNYARRLARDAGCDAKIVAKVERAEAVCDQNAMDDIILASDVVMVARGDLGVEIGDPELVGIQKALIRRARQLNRAVITATQMMESMITNPMPTRAEVMDVANAVLDGTDAVMLSAETAAGQYPSETVAAMARVCLGAEKIPSINVSKHRLDVQFDNVEEAIAMSAMYAANHLKGVTAIITMTESGRTALMTSRISSGLPIFAMSRHERTLNLTALYRGVTPVHFDSAADGVVAAHEAVNLLRDKGYLVSGDLVIVTQGDVMSTVGSTNTTRILTVE.

Arg-36 contacts substrate. K(+) is bound by residues Asn-38, Ser-40, and Asp-70. Residue 38–41 (NFSH) coordinates ATP. The ATP site is built by Arg-77 and Lys-160. Lys-223 contacts substrate. Glu-225 provides a ligand contact to Mg(2+). Substrate-binding residues include Gly-251, Asp-252, and Thr-284. Asp-252 is a Mg(2+) binding site.

The protein belongs to the pyruvate kinase family. In terms of assembly, homotetramer. It depends on Mg(2+) as a cofactor. Requires K(+) as cofactor.

It carries out the reaction pyruvate + ATP = phosphoenolpyruvate + ADP + H(+). The protein operates within carbohydrate degradation; glycolysis; pyruvate from D-glyceraldehyde 3-phosphate: step 5/5. Allosterically activated by AMP and by several sugar phosphates. Belongs to type II PK. Functionally, catalyzes the formation of pyruvate in the last step of glycolysis, it is irreversible under physiological conditions. The reaction is critical for the control of metabolic flux in the second part of glycolysis. This chain is Pyruvate kinase II (pykA), found in Salmonella typhimurium (strain LT2 / SGSC1412 / ATCC 700720).